The sequence spans 89 residues: Large ribosomal subunit protein uL30 (89 aa).

The protein belongs to the universal ribosomal protein uL30 family. Part of the 50S ribosomal subunit.

In Myxococcus xanthus (strain DK1622), this protein is Large ribosomal subunit protein uL30.